We begin with the raw amino-acid sequence, 492 residues long: Ammonium transporter MEP1 (492 aa).

The Extracellular segment spans residues 1–18 (MESRTTGPLTTETYDGPT). Residues 19–39 (VAFMILGAALVFFMVPGLGFL) traverse the membrane as a helical segment. Residues 40-49 (YSGLARRKSA) are Cytoplasmic-facing. The chain crosses the membrane as a helical span at residues 50 to 70 (LALIWVVLMATLVGILQWYFW). Residues 71–109 (GYSLAFSKSAPNNKFIGNLDSFGFRNVYGKKFDEDAYPE) lie on the Extracellular side of the membrane. The chain crosses the membrane as a helical span at residues 110–130 (LAYATFQMMFSCVNLSIIAGA). At 131 to 140 (TAERGRLLPH) the chain is on the cytoplasmic side. A helical transmembrane segment spans residues 141-161 (MVFLFILATIGYCPVTYWIWS). The Extracellular segment spans residues 162 to 174 (PGGWAYQWGVLDW). A helical membrane pass occupies residues 175–195 (AGGGNIEILSAVSGFVYSWFL). Residues 196 to 210 (GKRNEKLLINFRPHN) lie on the Cytoplasmic side of the membrane. Residues 211–231 (VSLVTLGTSILWFGWLLFNSA) traverse the membrane as a helical segment. Over 232-240 (SSLSPNLRS) the chain is Extracellular. The helical transmembrane segment at 241–261 (VYAFMNTCLSAITGGMTWCLL) threads the bilayer. Residues 262–268 (DYRSEKK) are Cytoplasmic-facing. Residues 269 to 289 (WSTVGLCSGIISGLVAATPSS) form a helical membrane-spanning segment. Position 290 (Gly290) is a topological domain, extracellular. The helical transmembrane segment at 291 to 311 (CITLYGSLIQGIVAGVVCNFA) threads the bilayer. Residues 312–331 (TKLKYYAKVDDAMDILAEHG) lie on the Cytoplasmic side of the membrane. Residues 332–352 (VAGVIGLIFNALFGADWVIGM) form a helical membrane-spanning segment. Over 353–373 (DGTTEHEGGWVTHNYKQMYKQ) the chain is Extracellular. The chain crosses the membrane as a helical span at residues 374–394 (IAYIAASIGYTAAVTAIICFV). Residues 395–492 (LGYIPGMRLR…PIHQEDPANR (98 aa)) are Cytoplasmic-facing. Residues Ser442 and Ser445 each carry the phosphoserine modification. A disordered region spans residues 455 to 492 (HLAAERSSSGTNSSSDGNGEMIQSEKILPIHQEDPANR). Residues 461-473 (SSSGTNSSSDGNG) show a composition bias toward low complexity.

The protein belongs to the ammonia transporter channel (TC 1.A.11.2) family.

The protein localises to the membrane. In terms of biological role, transporter for ammonium (both charged and uncharged NH3 and NH4) to use as a nitrogen source. Can also transport methylamine. The affinity of MEP1 is about twenty times lower than that of MEP2. MEP3 has the lowest affinity. The polypeptide is Ammonium transporter MEP1 (MEP1) (Saccharomyces cerevisiae (strain ATCC 204508 / S288c) (Baker's yeast)).